Reading from the N-terminus, the 254-residue chain is Isoprenyl transferase (254 aa).

Residue D12 is part of the active site. Position 12 (D12) interacts with Mg(2+). Residues 13 to 16, W17, R25, H29, and 57 to 59 contribute to the substrate site; these read GNGR and SSE. Catalysis depends on N60, which acts as the Proton acceptor. Substrate is bound by residues W61, R63, R180, and 186–188; that span reads RLS. A Mg(2+)-binding site is contributed by E199.

It belongs to the UPP synthase family. As to quaternary structure, homodimer. Mg(2+) is required as a cofactor.

In terms of biological role, catalyzes the condensation of isopentenyl diphosphate (IPP) with allylic pyrophosphates generating different type of terpenoids. The protein is Isoprenyl transferase of Brucella abortus biovar 1 (strain 9-941).